A 379-amino-acid polypeptide reads, in one-letter code: Cyclic di-GMP phosphodiesterase PdeB (379 aa).

The 197-residue stretch at 114 to 310 (FYKKQKKIFI…PLDFIVELND (197 aa)) folds into the HD-GYP domain.

Requires Mn(2+) as cofactor.

It carries out the reaction 3',3'-c-di-GMP + 2 H2O = 2 GMP + 2 H(+). Phosphodiesterase (PDE) that catalyzes the hydrolysis of cyclic diguanylate (c-di-GMP) to GMP. The sequence is that of Cyclic di-GMP phosphodiesterase PdeB from Borreliella burgdorferi (strain ATCC 35210 / DSM 4680 / CIP 102532 / B31) (Borrelia burgdorferi).